The sequence spans 526 residues: Calcium-dependent protein kinase 28 (526 aa).

Positions 1–37 are disordered; the sequence is MQPDPQPHGRGREKAAGAGPRLPPPVTAPSVGRPASV. One can recognise a Protein kinase domain in the interval 49–307; it reads YRIGKKLGQG…AHEVLCHPWI (259 aa). ATP is bound by residues 55–63 and Lys-78; that span reads LGQGQFGTT. The active-site Proton acceptor is Asp-173. The tract at residues 313–343 is autoinhibitory domain; that stretch reads APDKPIDSAVLSRLKHFSAMNKLKKMALRVI. EF-hand domains lie at 350–385, 386–421, 422–457, and 460–491; these read EEIG…VGSD, LMEP…MNKL, EREE…FGLS, and HLED…GNAG. 19 residues coordinate Ca(2+): Asp-363, Asp-365, Ser-367, Thr-369, Glu-374, Asp-399, Asp-401, Ser-403, Thr-405, Glu-410, Asp-435, Asp-437, Ser-439, Glu-446, Asp-469, Asn-471, Asp-473, Gln-475, and Glu-480.

The protein belongs to the protein kinase superfamily. Ser/Thr protein kinase family. CDPK subfamily.

The enzyme catalyses L-seryl-[protein] + ATP = O-phospho-L-seryl-[protein] + ADP + H(+). It catalyses the reaction L-threonyl-[protein] + ATP = O-phospho-L-threonyl-[protein] + ADP + H(+). With respect to regulation, activated by calcium. Autophosphorylation may play an important role in the regulation of the kinase activity. Its function is as follows. May play a role in signal transduction pathways that involve calcium as a second messenger. This Oryza sativa subsp. japonica (Rice) protein is Calcium-dependent protein kinase 28.